The primary structure comprises 404 residues: Probable eukaryotic initiation factor 4A (404 aa).

The segment at 1-28 (MAQQGKVEPQDQDSFLDDQPGIRPIPSF) is disordered. Residues 26–54 (PSFDDMPLHQNLLRGIYSHGFEKPSSIQQ) carry the Q motif motif. The 175-residue stretch at 57–231 (IVPFTRGGDI…KKFMRDPTRI (175 aa)) folds into the Helicase ATP-binding domain. ATP is bound at residue 70-77 (AQSGTGKT). The DEAD box motif lies at 179–182 (DEAD). Residues 242–402 (GIKQYFIAVE…ELPVDFAAYL (161 aa)) enclose the Helicase C-terminal domain.

The protein belongs to the DEAD box helicase family. eIF4A subfamily. EIF4F is a multi-subunit complex, the composition of which varies with external and internal environmental conditions. It is composed of at least EIF4A, EIF4E and EIF4G.

The catalysed reaction is ATP + H2O = ADP + phosphate + H(+). Functionally, ATP-dependent RNA helicase which is a subunit of the eIF4F complex involved in cap recognition and is required for mRNA binding to ribosome. In the current model of translation initiation, eIF4A unwinds RNA secondary structures in the 5'-UTR of mRNAs which is necessary to allow efficient binding of the small ribosomal subunit, and subsequent scanning for the initiator codon. The chain is Probable eukaryotic initiation factor 4A from Trypanosoma cruzi (strain CL Brener).